Consider the following 293-residue polypeptide: Homoserine kinase (293 aa).

84–94 provides a ligand contact to ATP; that stretch reads PFSRGLGSSSS.

This sequence belongs to the GHMP kinase family. Homoserine kinase subfamily.

The protein localises to the cytoplasm. The catalysed reaction is L-homoserine + ATP = O-phospho-L-homoserine + ADP + H(+). The protein operates within amino-acid biosynthesis; L-threonine biosynthesis; L-threonine from L-aspartate: step 4/5. In terms of biological role, catalyzes the ATP-dependent phosphorylation of L-homoserine to L-homoserine phosphate. The protein is Homoserine kinase of Campylobacter fetus subsp. fetus (strain 82-40).